The primary structure comprises 226 residues: uncharacterized protein (226 aa).

Disordered stretches follow at residues 1 to 20 (MGAE…AVQT) and 205 to 226 (LDRK…QRDA).

This is an uncharacterized protein from Treponema pallidum (strain Nichols).